A 268-amino-acid chain; its full sequence is Protein limb expression 1 homolog (268 aa).

This sequence belongs to the LIX1 family. In terms of assembly, interacts with ft (via intracellular domain) and ds (via intracellular domain).

It localises to the apical cell membrane. It is found in the cytoplasm. Its function is as follows. Component of the Fat (ft) signaling pathway that functions in normal development of various organs such as the wing and leg. In developing imaginal disks, involved in regulating both the protein levels and apical localization of ft and ds. Involved in establishing planar cell polarity (PCP) along the anterior-posterior axis of the wing (the early Fz signaling event), probably by acting upstream of ds and ft to regulate Fz activity. This chain is Protein limb expression 1 homolog, found in Drosophila melanogaster (Fruit fly).